The sequence spans 1054 residues: SMC5-SMC6 complex localization factor protein 1 (1054 aa).

2 consecutive BRCT domains span residues 2-80 (EDSA…AKSG) and 121-199 (PGAF…LLEK). The tract at residues 283 to 303 (RHGLENQKETKKKDKNIQRSY) is disordered. Over residues 284 to 299 (HGLENQKETKKKDKNI) the composition is skewed to basic and acidic residues. The segment at 407 to 1054 (PRGILNLIEN…MMCQSITELS (648 aa)) is NSE5-like domain; mediates interaction with SLF2. 3 ANK repeats span residues 802-832 (KGETALHRVCIKNQVEKLIILLSLPGIDINV), 836-865 (AGWTPLHEACNYGNTECVQEILQRCPEVDL), and 870-900 (DGVTPLHDALSNGHVEIGKLLLQRGGPELLQ).

Interacts (via BRCT domains) with RAD18 (via C-terminus and phosphorylated form); this interaction is required for efficient repair of UV-induced DNA damage. Interacts (via N-terminus) with SLF2; this interaction links RAD18 to the SMC5-SMC6 complex. Interacts (via BRCT domains) with RAD18; this interaction occurs in a SLF2-independent manner. Interacts with SMC6. In terms of tissue distribution, widely expressed. Expressed in testis. Expressed in spermatocytes.

It is found in the nucleus. It localises to the cytoplasm. Its subcellular location is the cytoskeleton. The protein resides in the microtubule organizing center. The protein localises to the centrosome. Its function is as follows. Plays a role in the DNA damage response (DDR) pathway by regulating postreplication repair of UV-damaged DNA and genomic stability maintenance. The SLF1-SLF2 complex acts to link RAD18 with the SMC5-SMC6 complex at replication-coupled interstrand cross-links (ICL) and DNA double-strand breaks (DSBs) sites on chromatin during DNA repair in response to stalled replication forks. Promotes the recruitment of SLF2 and the SMC5-SMC6 complex to DNA lesions. This Mus musculus (Mouse) protein is SMC5-SMC6 complex localization factor protein 1.